Consider the following 426-residue polypeptide: Serine--tRNA ligase (426 aa).

233–235 (TSE) is an L-serine binding site. ATP is bound at residue 264–266 (RAE). Residue E287 participates in L-serine binding. 351-354 (EISS) serves as a coordination point for ATP. L-serine is bound at residue S387.

The protein belongs to the class-II aminoacyl-tRNA synthetase family. Type-1 seryl-tRNA synthetase subfamily. As to quaternary structure, homodimer. The tRNA molecule binds across the dimer.

It localises to the cytoplasm. The enzyme catalyses tRNA(Ser) + L-serine + ATP = L-seryl-tRNA(Ser) + AMP + diphosphate + H(+). It catalyses the reaction tRNA(Sec) + L-serine + ATP = L-seryl-tRNA(Sec) + AMP + diphosphate + H(+). The protein operates within aminoacyl-tRNA biosynthesis; selenocysteinyl-tRNA(Sec) biosynthesis; L-seryl-tRNA(Sec) from L-serine and tRNA(Sec): step 1/1. Catalyzes the attachment of serine to tRNA(Ser). Is also able to aminoacylate tRNA(Sec) with serine, to form the misacylated tRNA L-seryl-tRNA(Sec), which will be further converted into selenocysteinyl-tRNA(Sec). This chain is Serine--tRNA ligase, found in Xanthomonas euvesicatoria pv. vesicatoria (strain 85-10) (Xanthomonas campestris pv. vesicatoria).